The primary structure comprises 631 residues: 1,4-alpha-glucan branching enzyme GlgB (631 aa).

Asp-309 acts as the Nucleophile in catalysis. Glu-362 functions as the Proton donor in the catalytic mechanism.

The protein belongs to the glycosyl hydrolase 13 family. GlgB subfamily. Monomer.

It carries out the reaction Transfers a segment of a (1-&gt;4)-alpha-D-glucan chain to a primary hydroxy group in a similar glucan chain.. It participates in glycan biosynthesis; glycogen biosynthesis. Functionally, catalyzes the formation of the alpha-1,6-glucosidic linkages in glycogen by scission of a 1,4-alpha-linked oligosaccharide from growing alpha-1,4-glucan chains and the subsequent attachment of the oligosaccharide to the alpha-1,6 position. This is 1,4-alpha-glucan branching enzyme GlgB from Marinobacter nauticus (strain ATCC 700491 / DSM 11845 / VT8) (Marinobacter aquaeolei).